The chain runs to 161 residues: UPF0178 protein BR1979/BS1330_I1973 (161 aa).

The protein belongs to the UPF0178 family.

The sequence is that of UPF0178 protein BR1979/BS1330_I1973 from Brucella suis biovar 1 (strain 1330).